The following is a 304-amino-acid chain: Galactose 1-dehydrogenase (304 aa).

It belongs to the Gfo/Idh/MocA family. Homodimer.

It is found in the cytoplasm. The catalysed reaction is D-galactose + NAD(+) = D-galactono-1,4-lactone + NADH + H(+). The protein operates within carbohydrate metabolism; galactose metabolism. Catalyzes the dehydrogenation of D-galactose by either NAD(+) or NADP(+). Oxidizes following sugars in decreasing order: D-fucose &gt; D-galactose &gt; L-arabinose &gt; 2-deoxy-D-galactose &gt;&gt; 4-deoxy-D-galactose &gt; 2-deoxy-2-amino-D-galactose. The sequence is that of Galactose 1-dehydrogenase (gal) from Pseudomonas fluorescens.